A 502-amino-acid polypeptide reads, in one-letter code: Probable cytosol aminopeptidase (502 aa).

Positions 269 and 274 each coordinate Mn(2+). K281 is a catalytic residue. 3 residues coordinate Mn(2+): D292, D351, and E353. R355 is an active-site residue.

Belongs to the peptidase M17 family. Requires Mn(2+) as cofactor.

It is found in the cytoplasm. It carries out the reaction Release of an N-terminal amino acid, Xaa-|-Yaa-, in which Xaa is preferably Leu, but may be other amino acids including Pro although not Arg or Lys, and Yaa may be Pro. Amino acid amides and methyl esters are also readily hydrolyzed, but rates on arylamides are exceedingly low.. The enzyme catalyses Release of an N-terminal amino acid, preferentially leucine, but not glutamic or aspartic acids.. Its function is as follows. Presumably involved in the processing and regular turnover of intracellular proteins. Catalyzes the removal of unsubstituted N-terminal amino acids from various peptides. This is Probable cytosol aminopeptidase from Photobacterium profundum (strain SS9).